The primary structure comprises 432 residues: Ribosomal protein uS12 methylthiotransferase RimO (432 aa).

In terms of domain architecture, MTTase N-terminal spans 4-122 (NTIDIITLGC…LLADLGKAYK (119 aa)). Positions 13, 51, 85, 146, 150, and 153 each coordinate [4Fe-4S] cluster. The Radical SAM core domain occupies 132-363 (TTPHHYAYLK…MALQQEIAGE (232 aa)). The region spanning 366 to 432 (QTKIGKEFKV…DDFDLYASIL (67 aa)) is the TRAM domain.

It belongs to the methylthiotransferase family. RimO subfamily. [4Fe-4S] cluster serves as cofactor.

The protein resides in the cytoplasm. The enzyme catalyses L-aspartate(89)-[ribosomal protein uS12]-hydrogen + (sulfur carrier)-SH + AH2 + 2 S-adenosyl-L-methionine = 3-methylsulfanyl-L-aspartate(89)-[ribosomal protein uS12]-hydrogen + (sulfur carrier)-H + 5'-deoxyadenosine + L-methionine + A + S-adenosyl-L-homocysteine + 2 H(+). Its function is as follows. Catalyzes the methylthiolation of an aspartic acid residue of ribosomal protein uS12. The protein is Ribosomal protein uS12 methylthiotransferase RimO of Phocaeicola vulgatus (strain ATCC 8482 / DSM 1447 / JCM 5826 / CCUG 4940 / NBRC 14291 / NCTC 11154) (Bacteroides vulgatus).